A 154-amino-acid chain; its full sequence is SsrA-binding protein (154 aa).

Basic and acidic residues predominate over residues 123–142; the sequence is AEHDKRHTIKDRDWQREQGR. Positions 123-154 are disordered; the sequence is AEHDKRHTIKDRDWQREQGRLMRHKVSAPHKD. Residues 143–154 are compositionally biased toward basic residues; the sequence is LMRHKVSAPHKD.

The protein belongs to the SmpB family.

The protein localises to the cytoplasm. Its function is as follows. Required for rescue of stalled ribosomes mediated by trans-translation. Binds to transfer-messenger RNA (tmRNA), required for stable association of tmRNA with ribosomes. tmRNA and SmpB together mimic tRNA shape, replacing the anticodon stem-loop with SmpB. tmRNA is encoded by the ssrA gene; the 2 termini fold to resemble tRNA(Ala) and it encodes a 'tag peptide', a short internal open reading frame. During trans-translation Ala-aminoacylated tmRNA acts like a tRNA, entering the A-site of stalled ribosomes, displacing the stalled mRNA. The ribosome then switches to translate the ORF on the tmRNA; the nascent peptide is terminated with the 'tag peptide' encoded by the tmRNA and targeted for degradation. The ribosome is freed to recommence translation, which seems to be the essential function of trans-translation. This Leptothrix cholodnii (strain ATCC 51168 / LMG 8142 / SP-6) (Leptothrix discophora (strain SP-6)) protein is SsrA-binding protein.